The sequence spans 404 residues: MAAVPELLEQQEEDRSKLRSVSVDLNVDPSLQIDIPDALSERDKVKFTVHTKTTLPTFQSPEFSVTRQHEDFVWLHDTLTETTDYAGLIIPPAPTKPDFDGPREKMQKLGEGEGSMTKEEFAKMKQELEAEYLAVFKKTVSSHEVFLQRLSSHPVLSKDRNFHVFLEYDQDLSVRRKNTKEMFGGFFKSVVKSADEVLFSGVKEVDDFFEQEKNFLINYYNRIKDSCAKADKMTRSHKNVADDYIHTAACLHSLALEEPTVIKKYLLKVAELFEKLRKVEGRVSSDEDLKLTELLRYYMLNIEAAKDLLYRRTKALIDYENSNKALDKARLKSKDVKLAETHQQECCQKFEQLSESAKEELINFKRKRVAAFRKNLIEMSELEIKHARNNVSLLQSCIDLFKNN.

Ala2 bears the N-acetylalanine mark. A PX domain is found at 25–172 (LNVDPSLQID…HVFLEYDQDL (148 aa)). Residues 40–46 (SERDKVK), 99–105 (FDGPREK), and 113–116 (EGSM) each bind a 1,2-diacyl-sn-glycero-3-phospho-(1D-myo-inositol-4,5-bisphosphate). An interaction with DOCK1 region spans residues 169-261 (DQDLSVRRKN…HSLALEEPTV (93 aa)). Positions 183-200 (FGGFFKSVVKSADEVLFS) are membrane-binding amphipathic helix. Ser193 is modified (phosphoserine). The 203-residue stretch at 202 to 404 (VKEVDDFFEQ…QSCIDLFKNN (203 aa)) folds into the BAR domain. Position 275 is an N6-acetyllysine (Lys275).

It belongs to the sorting nexin family. In terms of assembly, forms heterodimers with BAR domain-containing sorting nexins SNX1 and SNX2; does not homodimerize. The heterodimers are proposed to self-assemble into helical arrays on the membrane to stabilize and expand local membrane curvature underlying endosomal tubule formation. Thought to be a component of the originally described retromer complex (also called SNX-BAR retromer) which is a pentamer containing the heterotrimeric retromer cargo-selective complex (CSC), also described as vacuolar protein sorting subcomplex (VPS), and a heterodimeric membrane-deforming subcomplex formed between SNX1 or SNX2 and SNX5 or SNX6 (also called SNX-BAR subcomplex); the respective CSC and SNX-BAR subcomplexes associate with low affinity. Interacts with SNX1, SNX2, VPS26A, VPS29, VPS35, DCTN1, DOCK1, MIB1, PIP5K1C. Interacts with HGS; increased by PIP5K1C kinase activity and by PtdIns(3P) and/or PtdIns(3,4)P2.

Its subcellular location is the endosome. The protein localises to the early endosome. It is found in the early endosome membrane. It localises to the cell membrane. The protein resides in the cytoplasmic vesicle membrane. Its subcellular location is the cytoplasm. The protein localises to the cell projection. It is found in the phagocytic cup. It localises to the ruffle. In terms of biological role, involved in several stages of intracellular trafficking. Interacts with membranes containing phosphatidylinositol lipids. Acts in part as component of the retromer membrane-deforming SNX-BAR subcomplex. The SNX-BAR retromer mediates retrograde transport of cargo proteins from endosomes to the trans-Golgi network (TGN) and is involved in endosome-to-plasma membrane transport for cargo protein recycling. The SNX-BAR subcomplex functions to deform the donor membrane into a tubular profile called endosome-to-TGN transport carrier (ETC). Does not have in vitro vesicle-to-membrane remodeling activity. Involved in retrograde transport of lysosomal enzyme receptor IGF2R. May function as link between endosomal transport vesicles and dynactin. Plays a role in the internalization of EGFR after EGF stimulation. Involved in EGFR endosomal sorting and degradation; the function involves PIP5K1C and is retromer-independent. Together with PIP5K1C facilitates HGS interaction with ubiquitinated EGFR, which initiates EGFR sorting to intraluminal vesicles (ILVs) of the multivesicular body for subsequent lysosomal degradation. Involved in E-cadherin sorting and degradation; inhibits PIP5K1C-mediated E-cadherin degradation. Plays a role in macropinocytosis. This Rattus norvegicus (Rat) protein is Sorting nexin-5 (Snx5).